Reading from the N-terminus, the 320-residue chain is Tetraspanin-32 (320 aa).

The next 4 helical transmembrane spans lie at 14–34 (MLVTCFFILLLGLSVATMVTL), 60–80 (WAFSAGLSLVGLLTLGAVLSA), 90–110 (LMAGGFLCFSLAFCAQVQVVF), and 203–223 (SIGLALTVSALLFSSFLWFAI).

The protein belongs to the tetraspanin (TM4SF) family. In terms of tissue distribution, expressed ubiquitously at low levels. High levels of expression are confined to hematopoietic tissues including peripheral blood leukocytes, thymus and spleen.

The protein resides in the membrane. The chain is Tetraspanin-32 (TSPAN32) from Homo sapiens (Human).